Reading from the N-terminus, the 848-residue chain is Probable disease resistance protein At5g43730 (848 aa).

Residues 25–62 (SNYIHLMESNLDALQKTMEELKNGRDDLLARVSIEEDK) adopt a coiled-coil conformation. Residues 137-439 (VAQKIIPKAE…CEGYINPNRY (303 aa)) form the NB-ARC domain. ATP is bound at residue 179–186 (GMGGIGKT). 5 LRR repeats span residues 534–555 (NLSTLLLPYNKLVDISVGFFLF), 558–580 (KLVVLDLSTNWSLIELPEEISNL), 582–604 (SLQYLNLSLTGIKSLPVGLKKLR), 605–627 (KLIYLNLEFTNVLESLVGIATTL), and 629–649 (NLQVLKLFYSLFCVDDIIMEE).

It belongs to the disease resistance NB-LRR family.

Probable disease resistance protein. The polypeptide is Probable disease resistance protein At5g43730 (Arabidopsis thaliana (Mouse-ear cress)).